Reading from the N-terminus, the 83-residue chain is uncharacterized protein (83 aa).

This is an uncharacterized protein from Acidianus bottle-shaped virus (isolate Italy/Pozzuoli) (ABV).